Reading from the N-terminus, the 466-residue chain is Histone acetyltransferase type B catalytic subunit DDB_G0275159 (466 aa).

An N-acetyltransferase domain is found at 169–366; sequence AVFRYHEKLQ…FRIAIKKRLY (198 aa). Acetyl-CoA-binding positions include 240 to 242 and 247 to 253; these read YLI and QRMGHGK. Glu-279 (proton donor/acceptor) is an active-site residue. A coiled-coil region spans residues 372–459; sequence DSEQIEKMKQ…LEENYHKTLS (88 aa).

The protein belongs to the HAT1 family.

The enzyme catalyses L-lysyl-[protein] + acetyl-CoA = N(6)-acetyl-L-lysyl-[protein] + CoA + H(+). This chain is Histone acetyltransferase type B catalytic subunit DDB_G0275159, found in Dictyostelium discoideum (Social amoeba).